The following is a 634-amino-acid chain: Probable potassium transport system protein Kup (634 aa).

A run of 12 helical transmembrane segments spans residues 19–39 (AIGL…TSPL), 62–82 (VLSL…VIFV), 113–133 (FVVV…MITP), 150–170 (GLEH…FLIQ), 177–197 (IGIL…ALGV), 225–245 (IGVA…ALYA), 259–279 (WFLL…ATIL), 291–311 (LLAP…ATVI), 349–369 (IYIG…VLGF), 379–399 (YGVA…VVIW), 406–426 (LWLG…FFAA), and 431–451 (VIQG…LMST).

Belongs to the HAK/KUP transporter (TC 2.A.72) family.

The protein localises to the cell inner membrane. It carries out the reaction K(+)(in) + H(+)(in) = K(+)(out) + H(+)(out). Transport of potassium into the cell. Likely operates as a K(+):H(+) symporter. The polypeptide is Probable potassium transport system protein Kup (Pseudomonas aeruginosa (strain LESB58)).